The chain runs to 293 residues: Protease HtpX (293 aa).

The next 2 helical transmembrane spans lie at 4-24 and 34-54; these read IALF…VLSL and GLLI…LLMS. His139 is a Zn(2+) binding site. Glu140 is a catalytic residue. Residue His143 participates in Zn(2+) binding. The next 2 membrane-spanning stretches (helical) occupy residues 158–178 and 193–213; these read VVNT…AGFM and LIYF…ASII. Position 222 (Glu222) interacts with Zn(2+).

The protein belongs to the peptidase M48B family. The cofactor is Zn(2+).

Its subcellular location is the cell inner membrane. This Enterobacter sp. (strain 638) protein is Protease HtpX.